A 655-amino-acid chain; its full sequence is Broad substrate specificity ATP-binding cassette transporter ABCG2 (655 aa).

At 1 to 395 the chain is on the cytoplasmic side; it reads MSSSNVEVFI…KNLLGNPQAS (395 aa). In terms of domain architecture, ABC transporter spans 37–286; the sequence is LSFHNICYRV…FESAGYHCEA (250 aa). ATP-binding positions include 80–87, 184–190, Glu211, and His243; these read GPTGGGKS and RGVSGGE. Thr362 is modified (phosphothreonine; by PIM1). An ABC transmembrane type-2 domain is found at 389-651; sequence LGNPQASIAQ…TIAYLKLLFL (263 aa). Residues 396-416 traverse the membrane as a helical segment; sequence IAQIIVTVVLGLVIGAIYFGL. The Extracellular portion of the chain corresponds to 417–428; that stretch reads KNDSTGIQNRAG. Residues 429-449 traverse the membrane as a helical segment; that stretch reads VLFFLTTNQCFSSVSAVELFV. At 450-477 the chain is on the cytoplasmic side; the sequence is VEKKLFIHEYISGYYRVSSYFLGKLLSD. Residues 478–498 form a helical membrane-spanning segment; sequence LLPMRMLPSIIFTCIVYFMLG. Residues 499–506 lie on the Extracellular side of the membrane; it reads LKPKADAF. The chain crosses the membrane as a helical span at residues 507 to 527; sequence FVMMFTLMMVAYSASSMALAI. At 528–535 the chain is on the cytoplasmic side; that stretch reads AAGQSVVS. A helical transmembrane segment spans residues 536–556; it reads VATLLMTICFVFMMIFSGLLV. Over 557-630 the chain is Extracellular; it reads NLTTIASWLS…LSPWGLWKNH (74 aa). The cysteines at positions 592 and 608 are disulfide-linked. Residue Asn596 is glycosylated (N-linked (GlcNAc...) asparagine). Residues 631 to 651 form a helical membrane-spanning segment; the sequence is VALACMIVIFLTIAYLKLLFL. The Cytoplasmic portion of the chain corresponds to 652 to 655; it reads KKYS.

The protein belongs to the ABC transporter superfamily. ABCG family. Eye pigment precursor importer (TC 3.A.1.204) subfamily. As to quaternary structure, homodimer; disulfide-linked. The minimal functional unit is a homodimer, but the major oligomeric form in plasma membrane is a homotetramer with possibility of higher order oligomerization up to homododecamers. Post-translationally, N-glycosylated. Glycosylation-deficient ABCG2 is normally expressed and functional. Phosphorylated. Phosphorylation at Thr-362 by PIM1 is induced by drugs like mitoxantrone and is associated with cells increased drug resistance. It regulates the localization to the plasma membrane, the homooligomerization and therefore, the activity of the transporter. Highly expressed in placenta. Low expression in small intestine, liver and colon. Expressed in brain (at protein level).

The protein localises to the cell membrane. Its subcellular location is the apical cell membrane. It localises to the mitochondrion membrane. The catalysed reaction is ATP + H2O + xenobioticSide 1 = ADP + phosphate + xenobioticSide 2.. It catalyses the reaction urate(in) + ATP + H2O = urate(out) + ADP + phosphate + H(+). The enzyme catalyses indoxyl sulfate(in) + ATP + H2O = indoxyl sulfate(out) + ADP + phosphate + H(+). It carries out the reaction sphing-4-enine 1-phosphate(in) + ATP + H2O = sphing-4-enine 1-phosphate(out) + ADP + phosphate + H(+). The catalysed reaction is estrone 3-sulfate(in) + ATP + H2O = estrone 3-sulfate(out) + ADP + phosphate + H(+). It catalyses the reaction dehydroepiandrosterone 3-sulfate(in) + ATP + H2O = dehydroepiandrosterone 3-sulfate(out) + ADP + phosphate + H(+). The enzyme catalyses 4-methylumbelliferone sulfate(in) + ATP + H2O = 4-methylumbelliferone sulfate(out) + ADP + phosphate + H(+). It carries out the reaction 5,7-dimethyl-2-methylamino-4-(3-pyridylmethyl)-1,3-benzothiazol-6-yl beta-D-glucuronate(in) + ATP + H2O = 5,7-dimethyl-2-methylamino-4-(3-pyridylmethyl)-1,3-benzothiazol-6-yl beta-D-glucuronate(out) + ADP + phosphate + H(+). The catalysed reaction is 4-methylumbelliferone beta-D-glucuronate(in) + ATP + H2O = 4-methylumbelliferone beta-D-glucuronate(out) + ADP + phosphate + H(+). It catalyses the reaction 5,7-dimethyl-2-methylamino-4-(3-pyridylmethyl)-1,3-benzothiazol-6-yl sulfate(in) + ATP + H2O = 5,7-dimethyl-2-methylamino-4-(3-pyridylmethyl)-1,3-benzothiazol-6-yl sulfate(out) + ADP + phosphate + H(+). The enzyme catalyses 17beta-estradiol 17-O-(beta-D-glucuronate)(in) + ATP + H2O = 17beta-estradiol 17-O-(beta-D-glucuronate)(out) + ADP + phosphate + H(+). It carries out the reaction methotrexate(in) + ATP + H2O = methotrexate(out) + ADP + phosphate + H(+). The catalysed reaction is riboflavin(in) + ATP + H2O = riboflavin(out) + ADP + phosphate + H(+). It catalyses the reaction pheophorbide a(in) + ATP + H2O = pheophorbide a(out) + ADP + phosphate + H(+). The enzyme catalyses itaconate(in) + ATP + H2O = itaconate(out) + ADP + phosphate + H(+). With respect to regulation, specifically inhibited by the fungal toxin fumitremorgin C and Ko143. Functionally, broad substrate specificity ATP-dependent transporter of the ATP-binding cassette (ABC) family that actively extrudes a wide variety of physiological compounds, dietary toxins and xenobiotics from cells. Involved in porphyrin homeostasis, mediating the export of protoporphyrin IX (PPIX) from both mitochondria to cytosol and cytosol to extracellular space, it also functions in the cellular export of heme. Also mediates the efflux of sphingosine-1-P from cells. Acts as a urate exporter functioning in both renal and extrarenal urate excretion. In kidney, it also functions as a physiological exporter of the uremic toxin indoxyl sulfate. Also involved in the excretion of steroids like estrone 3-sulfate/E1S, 3beta-sulfooxy-androst-5-en-17-one/DHEAS, and other sulfate conjugates. Mediates the secretion of the riboflavin and biotin vitamins into milk. Extrudes pheophorbide a, a phototoxic porphyrin catabolite of chlorophyll, reducing its bioavailability. Plays an important role in the exclusion of xenobiotics from the brain. It confers to cells a resistance to multiple drugs and other xenobiotics including mitoxantrone, pheophorbide, camptothecin, methotrexate, azidothymidine, and the anthracyclines daunorubicin and doxorubicin, through the control of their efflux. In placenta, it limits the penetration of drugs from the maternal plasma into the fetus. May play a role in early stem cell self-renewal by blocking differentiation. In inflammatory macrophages, exports itaconate from the cytosol to the extracellular compartment and limits the activation of TFEB-dependent lysosome biogenesis involved in antibacterial innate immune response. The chain is Broad substrate specificity ATP-binding cassette transporter ABCG2 (ABCG2) from Homo sapiens (Human).